The sequence spans 766 residues: Ent-copalyl diphosphate synthase 3 (766 aa).

Residues F1–P30 constitute a chloroplast transit peptide. K222 provides a ligand contact to substrate. D354 and D356 together coordinate Mg(2+). The DXDD motif motif lies at D354–D357. K440 is a substrate binding site.

This sequence belongs to the terpene synthase family. Tpsc subfamily. Mg(2+) is required as a cofactor. As to expression, accumulates in leaves, and, at low levels, in germinating seeds.

It is found in the plastid. The protein localises to the chloroplast. The catalysed reaction is (2E,6E,10E)-geranylgeranyl diphosphate = ent-copalyl diphosphate. It functions in the pathway plant hormone biosynthesis; gibberellin biosynthesis. The protein operates within secondary metabolite biosynthesis; terpenoid biosynthesis. Its function is as follows. Involved in the biosynthesis of ent-kaurene diterpenoids natural products such as oridonin, miltiradiene, eriocalyxin B and nezukol, known to exhibit antitumor, anti-inflammatory and antibacterial activities, and in the production of gibberellins phytohormones. Catalyzes the conversion of (2E,6E,10E)-geranylgeranyl diphosphate (GGPP) to ent-copalyl diphosphate (ent-CPP). The polypeptide is Ent-copalyl diphosphate synthase 3 (Isodon eriocalyx (Plectranthus eriocalyx)).